The chain runs to 185 residues: MAEFRFIKTSLDGAIIIEPEVYTDERGYFMETFNEAIFQENGLEVRFVQDNESMSVRGVLRGLHFQREKPQGKLVRVIRGEIFDVAVDLRKNSDTYGEWTGVRLSDENRREFFIPEGFAHGFLALSDECIVNYKCTELYHPEYDSGIPWDDPDIGIDWPLEMVDDLIISEKDRNWKPLRENPVYL.

Residues Arg-26, Glu-31, 49–51 (QDN), and Arg-61 contribute to the substrate site. His-64 acts as the Proton acceptor in catalysis. The substrate site is built by Lys-73 and His-120. Tyr-133 functions as the Proton donor in the catalytic mechanism. Residues Asp-144 and Lys-171 each contribute to the substrate site.

The protein belongs to the dTDP-4-dehydrorhamnose 3,5-epimerase family. Homodimer.

The enzyme catalyses dTDP-4-dehydro-6-deoxy-alpha-D-glucose = dTDP-4-dehydro-beta-L-rhamnose. Its pathway is carbohydrate biosynthesis; dTDP-L-rhamnose biosynthesis. Its function is as follows. Catalyzes the epimerization of the C3' and C5'positions of dTDP-6-deoxy-D-xylo-4-hexulose, forming dTDP-6-deoxy-L-lyxo-4-hexulose. This Methanothermobacter thermautotrophicus (strain ATCC 29096 / DSM 1053 / JCM 10044 / NBRC 100330 / Delta H) (Methanobacterium thermoautotrophicum) protein is dTDP-4-dehydrorhamnose 3,5-epimerase (rmlC).